The following is a 74-amino-acid chain: MSRFFRRRKYCRFTAEGVEFIDYKDLNTLKNYITETGKIVPSRITGTSARYQRQLATAVKRARYLALLPYCDNH.

This sequence belongs to the bacterial ribosomal protein bS18 family. In terms of assembly, part of the 30S ribosomal subunit. Forms a tight heterodimer with protein bS6.

Binds as a heterodimer with protein bS6 to the central domain of the 16S rRNA, where it helps stabilize the platform of the 30S subunit. The sequence is that of Small ribosomal subunit protein bS18 from Thioalkalivibrio sulfidiphilus (strain HL-EbGR7).